A 67-amino-acid polypeptide reads, in one-letter code: uncharacterized protein (67 aa).

This sequence to E.coli YbdD.

This is an uncharacterized protein from Escherichia coli O157:H7.